We begin with the raw amino-acid sequence, 919 residues long: MKVVSNFIFTILLTLNLSAALEVVTSRIDRGGIQGFHGDVKVHSGATWAILGTTLCSFFGGLEVEKGASLFIKSDNGPVLALNVALSTLVRPVINNGVISLNSKSSTSFSNFDIGGSSFTNNGEIYLASSGLVKSTAYLYAREWTNNGLIVAYQNQKAAGNIAFGTAYQTITNNGQICLRHQDFVPATKIKGTGCVTADEDTWIKLGNTILSVEPTHNFYLKDSKSSLIVHAVSSNQTFTVHGFGNGNKLGLTLPLTGNRDHFRFEYYPDTGILQLRAAALPQYFKIGKGYDSKLFRIVNSRGLKNAVTYDGPVPNNEIPAVCLIPCTNGPSAPESESDLNTPTTSSIETSSYSSAATESSVVSESSSAVDSLTSSSLSSKSESSDVVSSTTNIESSSTAIETTMNSESSTDAGSSSISQSESSSTAITSSSETSSSESMSASSTTASNTSIETDSGIVSQSESSSNALSSTEQSITSSPGQSTIYVNSTVTSTITSCDENKCTEDVVTIFTTVPCSTDCVPTTGDIPMSTSYTQRTVTSTITNCDEVSCSQDVVTYTTNVPHTTVDATTTTTTSTGGDNSTGGNESGSNHGSGAGSNEGSQSGPNNGSGSGSEGGSNNGSGSGSDSGSNNGSGSGSNNGSGSGSNNGSGSGSGSTEGSEGGSGSNEGSNHGSNEGSGSGSGSQTGSGSGSNNGSGSGSQSGSGSGSQSGSESGSNSGSNEGSNPGAGNGSNEGSGQGSGNGSEAGSGQGSGPNNGSGSGHNDGSGSGSNQGSNPGAGSGSGSESGSNAGSHSGSNEGAKTDSIEGFHTESKPGFNTGAHTDATVTGNSVANPVTTSTESDTTISVTVSITSYMTGFDGKPKPFTTVDVIPVPHSMPSNTTDSSSSVPTIDTNENGSSIVTGGKSILFGLIVSMVVLFM.

The N-terminal stretch at 1–20 (MKVVSNFIFTILLTLNLSAA) is a signal peptide. An N-linked (GlcNAc...) asparagine glycan is attached at Asn236. Residues 332–483 (SAPESESDLN…QSITSSPGQS (152 aa)) are disordered. A compositionally biased stretch (low complexity) spans 344–392 (TTSSIETSSYSSAATESSVVSESSSAVDSLTSSSLSSKSESSDVVSSTT). Residues 393-414 (NIESSSTAIETTMNSESSTDAG) show a composition bias toward polar residues. Residues 415–475 (SSSISQSESS…SNALSSTEQS (61 aa)) show a composition bias toward low complexity. Residues Asn449, Asn488, Asn580, Asn585, Asn607, Asn619, Asn631, Asn639, Asn647, and Asn693 are each glycosylated (N-linked (GlcNAc...) asparagine). The span at 567 to 590 (DATTTTTTSTGGDNSTGGNESGSN) shows a compositional bias: low complexity. Residues 567 to 839 (DATTTTTTST…VANPVTTSTE (273 aa)) are disordered. Gly residues-rich tracts occupy residues 607–665 (NGSG…GSGS) and 675–707 (EGSGSGSGSQTGSGSGSNNGSGSGSQSGSGSGS). The span at 708-724 (QSGSESGSNSGSNEGSN) shows a compositional bias: low complexity. Positions 725-783 (PGAGNGSNEGSGQGSGNGSEAGSGQGSGPNNGSGSGHNDGSGSGSNQGSNPGAGSGSGS) are enriched in gly residues. N-linked (GlcNAc...) asparagine glycosylation is found at Asn729, Asn741, and Asn755. Residues 784–798 (ESGSNAGSHSGSNEG) show a composition bias toward low complexity. The segment covering 799–811 (AKTDSIEGFHTES) has biased composition (basic and acidic residues). Residues 823–833 (ATVTGNSVANP) are compositionally biased toward polar residues. Residues Asn879 and Asn895 are each glycosylated (N-linked (GlcNAc...) asparagine). Asn895 carries the GPI-anchor amidated asparagine lipid modification. Positions 896–919 (GSSIVTGGKSILFGLIVSMVVLFM) are cleaved as a propeptide — removed in mature form.

The protein belongs to the HYR1/IFF family. Component of a multiprotein complex of 250 kDa composed of at least HYR1, MP65, and PRA1. Post-translationally, the GPI-anchor is attached to the protein in the endoplasmic reticulum and serves to target the protein to the cell surface. There, the glucosamine-inositol phospholipid moiety is cleaved off and the GPI-modified mannoprotein is covalently attached via its lipidless GPI glycan remnant to the 1,6-beta-glucan of the outer cell wall layer.

The protein localises to the secreted. It localises to the cell wall. The protein resides in the membrane. Functionally, GPI-anchored hyphal cell wall protein required for hyphal growth and virulence. Involved in innate immune cell evasion through conferring resistance to neutrophil killing. Binds kininogen, the proteinaceous kinin precursor, and contributes to trigger the kinin-forming cascade on the cell surface. Production of kinins is often involved in the human host defense against microbial infections. In Candida albicans (strain SC5314 / ATCC MYA-2876) (Yeast), this protein is Hyphally regulated cell wall protein 1 (HYR1).